The chain runs to 94 residues: Co-chaperonin GroES (94 aa).

Belongs to the GroES chaperonin family. As to quaternary structure, heptamer of 7 subunits arranged in a ring. Interacts with the chaperonin GroEL.

Its subcellular location is the cytoplasm. Its function is as follows. Together with the chaperonin GroEL, plays an essential role in assisting protein folding. The GroEL-GroES system forms a nano-cage that allows encapsulation of the non-native substrate proteins and provides a physical environment optimized to promote and accelerate protein folding. GroES binds to the apical surface of the GroEL ring, thereby capping the opening of the GroEL channel. This is Co-chaperonin GroES from Streptococcus pneumoniae serotype 19F (strain G54).